We begin with the raw amino-acid sequence, 270 residues long: GTP cyclohydrolase FolE2 2 (270 aa).

It belongs to the GTP cyclohydrolase IV family.

The enzyme catalyses GTP + H2O = 7,8-dihydroneopterin 3'-triphosphate + formate + H(+). The protein operates within cofactor biosynthesis; 7,8-dihydroneopterin triphosphate biosynthesis; 7,8-dihydroneopterin triphosphate from GTP: step 1/1. Functionally, converts GTP to 7,8-dihydroneopterin triphosphate. This chain is GTP cyclohydrolase FolE2 2, found in Dechloromonas aromatica (strain RCB).